The chain runs to 363 residues: Putative agmatine deiminase (363 aa).

The span at methionine 1–lysine 10 shows a compositional bias: polar residues. The interval methionine 1–histidine 20 is disordered. Cysteine 355 (amidino-cysteine intermediate) is an active-site residue.

It belongs to the agmatine deiminase family.

The enzyme catalyses agmatine + H2O = N-carbamoylputrescine + NH4(+). This chain is Putative agmatine deiminase, found in Photobacterium profundum (strain SS9).